The following is a 419-amino-acid chain: UDP-N-acetylglucosamine 1-carboxyvinyltransferase (419 aa).

Residue 22–23 (KN) participates in phosphoenolpyruvate binding. UDP-N-acetyl-alpha-D-glucosamine is bound at residue arginine 93. Cysteine 117 (proton donor) is an active-site residue. Cysteine 117 is subject to 2-(S-cysteinyl)pyruvic acid O-phosphothioketal. Residues aspartate 306 and isoleucine 328 each coordinate UDP-N-acetyl-alpha-D-glucosamine.

It belongs to the EPSP synthase family. MurA subfamily.

It is found in the cytoplasm. It catalyses the reaction phosphoenolpyruvate + UDP-N-acetyl-alpha-D-glucosamine = UDP-N-acetyl-3-O-(1-carboxyvinyl)-alpha-D-glucosamine + phosphate. It functions in the pathway cell wall biogenesis; peptidoglycan biosynthesis. Cell wall formation. Adds enolpyruvyl to UDP-N-acetylglucosamine. The polypeptide is UDP-N-acetylglucosamine 1-carboxyvinyltransferase (Vesicomyosocius okutanii subsp. Calyptogena okutanii (strain HA)).